Consider the following 355-residue polypeptide: UDP-N-acetylglucosamine--N-acetylmuramyl-(pentapeptide) pyrophosphoryl-undecaprenol N-acetylglucosamine transferase (355 aa).

UDP-N-acetyl-alpha-D-glucosamine contacts are provided by residues 15–17, Asn127, Arg163, Ser191, Ile244, 263–268, and Gln288; these read TGG and ALTVSE.

It belongs to the glycosyltransferase 28 family. MurG subfamily.

It is found in the cell inner membrane. The enzyme catalyses di-trans,octa-cis-undecaprenyl diphospho-N-acetyl-alpha-D-muramoyl-L-alanyl-D-glutamyl-meso-2,6-diaminopimeloyl-D-alanyl-D-alanine + UDP-N-acetyl-alpha-D-glucosamine = di-trans,octa-cis-undecaprenyl diphospho-[N-acetyl-alpha-D-glucosaminyl-(1-&gt;4)]-N-acetyl-alpha-D-muramoyl-L-alanyl-D-glutamyl-meso-2,6-diaminopimeloyl-D-alanyl-D-alanine + UDP + H(+). It functions in the pathway cell wall biogenesis; peptidoglycan biosynthesis. Its function is as follows. Cell wall formation. Catalyzes the transfer of a GlcNAc subunit on undecaprenyl-pyrophosphoryl-MurNAc-pentapeptide (lipid intermediate I) to form undecaprenyl-pyrophosphoryl-MurNAc-(pentapeptide)GlcNAc (lipid intermediate II). In Escherichia coli O45:K1 (strain S88 / ExPEC), this protein is UDP-N-acetylglucosamine--N-acetylmuramyl-(pentapeptide) pyrophosphoryl-undecaprenol N-acetylglucosamine transferase.